A 770-amino-acid polypeptide reads, in one-letter code: Disabled homolog 2 (770 aa).

Residues 1–16 are compositionally biased toward polar residues; it reads MSNEVETSATNGQPDQ. The interval 1 to 38 is disordered; sequence MSNEVETSATNGQPDQQAAPKAPSKKEKKKGPEKTDEY. Ser-2 carries the N-acetylserine modification. Ser-2 carries the post-translational modification Phosphoserine. In terms of domain architecture, PID spans 45–196; it reads GDGVKYKAKL…KAVENGSEAL (152 aa). Residue Tyr-170 is modified to Phosphotyrosine. Ser-193 carries the phosphoserine modification. Residues 230–447 are required for localization to clathrin-coated pits; that stretch reads ESKDILLVDL…KPGRGRRTAK (218 aa). 2 disordered regions span residues 284–482 and 604–629; these read LNFF…LQPN and VSTQ…AGPP. 2 short sequence motifs (DPF) span residues 293–295 and 298–300; these read DPF. The span at 302–313 shows a compositional bias: polar residues; the sequence is QPDQSTPSSFDS. Ser-326 and Ser-328 each carry phosphoserine; in mitosis. Residues 366–396 are compositionally biased toward polar residues; the sequence is FSSSQTQPAVRTQNGVSEREQNGFSVKSSPN. Position 401 is a phosphoserine (Ser-401). Composition is skewed to polar residues over residues 407–425, 466–480, and 604–616; these read SIQN…SSPH, PSGQ…TALQ, and VSTQ…SSLL. The segment at 604-732 is sufficient for interaction with GRB2; it reads VSTQPPSMHS…SLPVTKSTDN (129 aa). Residues 619–627 are required for interaction with CSK; the sequence is PPQPPPRAG. Residues 649–770 form a required for interaction with MYO6 region; sequence KDVKEMFKDF…YRDPFGNPFA (122 aa). Residues 663 to 671 are required for interaction with GRB2 and CSK; the sequence is PPAVPARKG. Phosphoserine occurs at positions 675, 723, and 729. Positions 709 to 725 are sufficient for interaction with SH3KBP1 SH3 domain; the sequence is NKINEPPKPAPRQVSLP. The segment at 742–770 is disordered; sequence SFGSSQASVASSQPVSSEMYRDPFGNPFA. Positions 745 to 758 are enriched in low complexity; it reads SSQASVASSQPVSS.

In terms of assembly, interacts (via NPXY motif) with DAB2 (via PID domain). Can interact (via PID domain) with LDLR, APP, APLP1 and APLP2, and weakly with INPP5D (via NPXY motifs); the interaction is impaired by tyrosine phosphorylation of the respective NPXY motifs. Can weakly interact (via PID domain) with LRP1 (via NPXY motif); the interaction is enhanced by tyrosine phosphorylation of the NPXY motif. Interacts with LRP2 (via NPXY motif); the interaction is not affected by tyrosine phosphorylation of the NPXY motif. Interacts with clathrin; in vitro can assemble clathrin triskelia into polyhedral coats. Interacts with AP2A2, ITGB1, ITGB3, ITGB5, PIAS2, DAB2IP, NOSTRIN, FCHO1, DVL3, EPS15, ITSN1 and EPS15L1. Interacts with SH3KBP1 (via SH3 domains). Interacts with GRB2; competes with SOS1 for binding to GRB2 and the interaction is enhanced by EGF and NT-3 stimulation. Interacts with MAP3K7; the interaction is induced by TGF-beta stimulation and may mediate TGF-beta stimulated JNK activation. Interacts with AXIN1 and PPP1CA; the interactions are mutually exclusive. Interacts with the globular tail of MYO6. Interacts (via DPF motifs) with FCHO2; the interaction is direct and required for DAB2-mediated LDLR endocytosis. Interacts with LRP6; the interaction involves LRP6 phosphorylation by CK2 and sequesters LRP6 towards clathrin-mediated endocytosis. Associates with the TGF-beta receptor complex. Interacts with SMAD2 and SMAD3; the interactions are enhanced upon TGF-beta stimulation. Interacts with GRB2; the interaction is enhanced by EGF and NT-3 stimulation. Interacts with SRC; the interaction is enhanced by EGF stimulation. In terms of processing, phosphorylated. Phosphorylation during mitosis is leading to membrane displacement. As to expression, expressed in deep invaginations, inclusion cysts and the surface epithelial cells of the ovary. Also expressed in breast epithelial cells, spleen, thymus, prostate, testis, macrophages, fibroblasts, lung epithelial cells, placenta, brain stem, heart and small intestine. Expressed in kidney proximal tubular epithelial cells (at protein level).

Its subcellular location is the cytoplasm. The protein resides in the cytoplasmic vesicle. The protein localises to the clathrin-coated vesicle membrane. It localises to the membrane. It is found in the clathrin-coated pit. In terms of biological role, adapter protein that functions as a clathrin-associated sorting protein (CLASP) required for clathrin-mediated endocytosis of selected cargo proteins. Can bind and assemble clathrin, and binds simultaneously to phosphatidylinositol 4,5-bisphosphate (PtdIns(4,5)P2) and cargos containing non-phosphorylated NPXY internalization motifs, such as the LDL receptor, to recruit them to clathrin-coated pits. Can function in clathrin-mediated endocytosis independently of the AP-2 complex. Involved in endocytosis of integrin beta-1; this function seems to redundant with the AP-2 complex and seems to require DAB2 binding to endocytosis accessory EH domain-containing proteins such as EPS15, EPS15L1 and ITSN1. Involved in endocytosis of cystic fibrosis transmembrane conductance regulator/CFTR. Involved in endocytosis of megalin/LRP2 lipoprotein receptor during embryonal development. Required for recycling of the TGF-beta receptor. Involved in CFTR trafficking to the late endosome. Involved in several receptor-mediated signaling pathways. Involved in TGF-beta receptor signaling and facilitates phosphorylation of the signal transducer SMAD2. Mediates TFG-beta-stimulated JNK activation. May inhibit the canoniocal Wnt/beta-catenin signaling pathway by stabilizing the beta-catenin destruction complex through a competing association with axin preventing its dephosphorylation through protein phosphatase 1 (PP1). Sequesters LRP6 towards clathrin-mediated endocytosis, leading to inhibition of Wnt/beta-catenin signaling. May activate non-canonical Wnt signaling. In cell surface growth factor/Ras signaling pathways proposed to inhibit ERK activation by interrupting the binding of GRB2 to SOS1 and to inhibit SRC by preventing its activating phosphorylation at 'Tyr-419'. Proposed to be involved in modulation of androgen receptor (AR) signaling mediated by SRC activation; seems to compete with AR for interaction with SRC. Plays a role in the CSF-1 signal transduction pathway. Plays a role in cellular differentiation. Involved in cell positioning and formation of visceral endoderm (VE) during embryogenesis and proposed to be required in the VE to respond to Nodal signaling coming from the epiblast. Required for the epithelial to mesenchymal transition, a process necessary for proper embryonic development. May be involved in myeloid cell differentiation and can induce macrophage adhesion and spreading. May act as a tumor suppressor. The polypeptide is Disabled homolog 2 (DAB2) (Homo sapiens (Human)).